A 182-amino-acid chain; its full sequence is Large ribosomal subunit protein uL22 (182 aa).

Residues 155–182 (SGVDGAKQGKKKKKTDGVEKATTKRQKQ) form a disordered region.

The protein belongs to the universal ribosomal protein uL22 family.

This chain is Large ribosomal subunit protein uL22 (RpL17), found in Carabus granulatus (Ground beetle).